Here is a 258-residue protein sequence, read N- to C-terminus: Ribosomal RNA small subunit methyltransferase J (258 aa).

S-adenosyl-L-methionine-binding positions include 123–124 and aspartate 177; that span reads ER. Positions 232-258 are disordered; that stretch reads IDGPKPSHSLEGKSSRYDIYPKKALKA. Residues 239–252 are compositionally biased toward basic and acidic residues; sequence HSLEGKSSRYDIYP.

It belongs to the methyltransferase superfamily. RsmJ family.

Its subcellular location is the cytoplasm. The catalysed reaction is guanosine(1516) in 16S rRNA + S-adenosyl-L-methionine = N(2)-methylguanosine(1516) in 16S rRNA + S-adenosyl-L-homocysteine + H(+). Its function is as follows. Specifically methylates the guanosine in position 1516 of 16S rRNA. This Pseudomonas putida (strain GB-1) protein is Ribosomal RNA small subunit methyltransferase J.